We begin with the raw amino-acid sequence, 273 residues long: Small ribosomal subunit protein uS3 (273 aa).

Residues 40 to 110 (IRNLFFVNYR…NLDLTINEIG (71 aa)) form the KH type-2 domain. The span at 244 to 265 (QVLSANKLTGSDVETSSIQALT) shows a compositional bias: polar residues. The disordered stretch occupies residues 244 to 273 (QVLSANKLTGSDVETSSIQALTKPNKEDKQ).

The protein belongs to the universal ribosomal protein uS3 family. In terms of assembly, part of the 30S ribosomal subunit. Forms a tight complex with proteins S10 and S14.

In terms of biological role, binds the lower part of the 30S subunit head. Binds mRNA in the 70S ribosome, positioning it for translation. The protein is Small ribosomal subunit protein uS3 of Mycoplasma pneumoniae (strain ATCC 29342 / M129 / Subtype 1) (Mycoplasmoides pneumoniae).